Reading from the N-terminus, the 334-residue chain is Phosphate acyltransferase (334 aa).

It belongs to the PlsX family. Homodimer. Probably interacts with PlsY.

It is found in the cytoplasm. The enzyme catalyses a fatty acyl-[ACP] + phosphate = an acyl phosphate + holo-[ACP]. The protein operates within lipid metabolism; phospholipid metabolism. Its function is as follows. Catalyzes the reversible formation of acyl-phosphate (acyl-PO(4)) from acyl-[acyl-carrier-protein] (acyl-ACP). This enzyme utilizes acyl-ACP as fatty acyl donor, but not acyl-CoA. This is Phosphate acyltransferase from Streptococcus thermophilus (strain ATCC BAA-491 / LMD-9).